Reading from the N-terminus, the 386-residue chain is 5-amino-6-(D-ribitylamino)uracil--L-tyrosine 4-hydroxyphenyl transferase (386 aa).

The 248-residue stretch at 56-303 folds into the Radical SAM core domain; the sequence is VSYVINRNLN…MAVARLYLGD (248 aa). Residues Cys-70, Cys-74, and Cys-77 each coordinate [4Fe-4S] cluster.

This sequence belongs to the radical SAM superfamily. CofH family. In terms of assembly, consists of two subunits, CofG and CofH. It depends on [4Fe-4S] cluster as a cofactor.

It catalyses the reaction 5-amino-6-(D-ribitylamino)uracil + L-tyrosine + S-adenosyl-L-methionine = 5-amino-5-(4-hydroxybenzyl)-6-(D-ribitylimino)-5,6-dihydrouracil + 2-iminoacetate + 5'-deoxyadenosine + L-methionine + H(+). Its pathway is cofactor biosynthesis; coenzyme F0 biosynthesis. Catalyzes the radical-mediated synthesis of 5-amino-5-(4-hydroxybenzyl)-6-(D-ribitylimino)-5,6-dihydrouracil from 5-amino-6-(D-ribitylamino)uracil and L-tyrosine. This chain is 5-amino-6-(D-ribitylamino)uracil--L-tyrosine 4-hydroxyphenyl transferase, found in Synechococcus elongatus (strain ATCC 33912 / PCC 7942 / FACHB-805) (Anacystis nidulans R2).